A 478-amino-acid chain; its full sequence is Cytochrome c-552 (478 aa).

The N-terminal stretch at 1–26 (MARKTLRARRFFSLIFPFFFMTSVYA) is a signal peptide. H94 contributes to the heme c binding site. Heme is bound by residues C122, C125, and K126. Residues C160, C163, H164, C209, C212, and H213 each coordinate heme c. Ca(2+)-binding residues include E215, Y216, K261, and Q263. Residue Y216 coordinates substrate. Position 264 (H264) interacts with substrate. The heme c site is built by H275, C282, C285, H286, H301, C314, C317, H318, and H393.

Belongs to the cytochrome c-552 family. Requires Ca(2+) as cofactor. It depends on heme c as a cofactor.

The protein resides in the periplasm. The enzyme catalyses 6 Fe(III)-[cytochrome c] + NH4(+) + 2 H2O = 6 Fe(II)-[cytochrome c] + nitrite + 8 H(+). The protein operates within nitrogen metabolism; nitrate reduction (assimilation). Catalyzes the reduction of nitrite to ammonia, consuming six electrons in the process. This Salmonella arizonae (strain ATCC BAA-731 / CDC346-86 / RSK2980) protein is Cytochrome c-552.